A 117-amino-acid chain; its full sequence is Large ribosomal subunit protein bL19 (117 aa).

The protein belongs to the bacterial ribosomal protein bL19 family.

Functionally, this protein is located at the 30S-50S ribosomal subunit interface and may play a role in the structure and function of the aminoacyl-tRNA binding site. The chain is Large ribosomal subunit protein bL19 from Colwellia psychrerythraea (strain 34H / ATCC BAA-681) (Vibrio psychroerythus).